The chain runs to 348 residues: Holliday junction branch migration complex subunit RuvB (348 aa).

Positions 1-182 are large ATPase domain (RuvB-L); it reads MRIELLNTPA…FGINSRFDYY (182 aa). ATP is bound by residues I21, R22, G63, K66, T67, T68, 129–131, R172, Y182, and R219; that span reads EDF. T67 is a binding site for Mg(2+). The small ATPAse domain (RuvB-S) stretch occupies residues 183–253; it reads SADLLEKIII…IAMTTLDCLE (71 aa). A head domain (RuvB-H) region spans residues 256 to 348; the sequence is EEGLDDMDKK…EFPLEDDQRQ (93 aa). DNA contacts are provided by R311 and R316.

The protein belongs to the RuvB family. Homohexamer. Forms an RuvA(8)-RuvB(12)-Holliday junction (HJ) complex. HJ DNA is sandwiched between 2 RuvA tetramers; dsDNA enters through RuvA and exits via RuvB. An RuvB hexamer assembles on each DNA strand where it exits the tetramer. Each RuvB hexamer is contacted by two RuvA subunits (via domain III) on 2 adjacent RuvB subunits; this complex drives branch migration. In the full resolvosome a probable DNA-RuvA(4)-RuvB(12)-RuvC(2) complex forms which resolves the HJ.

The protein resides in the cytoplasm. The enzyme catalyses ATP + H2O = ADP + phosphate + H(+). Functionally, the RuvA-RuvB-RuvC complex processes Holliday junction (HJ) DNA during genetic recombination and DNA repair, while the RuvA-RuvB complex plays an important role in the rescue of blocked DNA replication forks via replication fork reversal (RFR). RuvA specifically binds to HJ cruciform DNA, conferring on it an open structure. The RuvB hexamer acts as an ATP-dependent pump, pulling dsDNA into and through the RuvAB complex. RuvB forms 2 homohexamers on either side of HJ DNA bound by 1 or 2 RuvA tetramers; 4 subunits per hexamer contact DNA at a time. Coordinated motions by a converter formed by DNA-disengaged RuvB subunits stimulates ATP hydrolysis and nucleotide exchange. Immobilization of the converter enables RuvB to convert the ATP-contained energy into a lever motion, pulling 2 nucleotides of DNA out of the RuvA tetramer per ATP hydrolyzed, thus driving DNA branch migration. The RuvB motors rotate together with the DNA substrate, which together with the progressing nucleotide cycle form the mechanistic basis for DNA recombination by continuous HJ branch migration. Branch migration allows RuvC to scan DNA until it finds its consensus sequence, where it cleaves and resolves cruciform DNA. This Chlorobium limicola (strain DSM 245 / NBRC 103803 / 6330) protein is Holliday junction branch migration complex subunit RuvB.